The sequence spans 264 residues: Iodotyrosine deiodinase (264 aa).

Residues 75–79 (RRTVR) and 103–104 (SG) contribute to the FMN site. Residues Ala105, Glu132, Tyr136, and Lys157 each contribute to the 3-iodo-L-tyrosine site. Residues 212–214 (TST) and Arg254 contribute to the FMN site.

Belongs to the nitroreductase family. It depends on FMN as a cofactor.

It carries out the reaction 2 iodide + L-tyrosine + 2 NADP(+) = 3,5-diiodo-L-tyrosine + 2 NADPH + H(+). The catalysed reaction is iodide + L-tyrosine + NADP(+) = 3-iodo-L-tyrosine + NADPH. The enzyme catalyses 3-iodo-L-tyrosine + iodide + NADP(+) = 3,5-diiodo-L-tyrosine + NADPH + H(+). It catalyses the reaction L-tyrosine + chloride + NADP(+) = 3-chloro-L-tyrosine + NADPH. It carries out the reaction bromide + L-tyrosine + NADP(+) = 3-bromo-L-tyrosine + NADPH. Functionally, catalyzes the dehalogenation of halotyrosines such as 3,5-diiodo-L-tyrosine. Likely to also catalyze the dehalogenation of other halotyrosines such as 3-bromo-L-tyrosine, 3-chloro-L-tyrosine and 3-iodo-L-tyrosine. This is Iodotyrosine deiodinase from Nematostella vectensis (Starlet sea anemone).